The following is a 744-amino-acid chain: Tripartite motif-containing protein 2 (744 aa).

Residue Ser10 is modified to Phosphoserine. An RING-type zinc finger spans residues 23-64 (CSICLERYKNPKVLPCLHTFCERCLQNYIPAHSLTLSCPVCR). Residues 113–154 (GKPLSCPNHDGNVMEFYCQSCETAMCRECTEGEHAEHPTVPL) form a B box-type zinc finger. The Zn(2+) site is built by Cys118, His121, Cys141, and His146. The stretch at 320 to 421 (TTNAVASETV…IRGSPFKLKV (102 aa)) is one Filamin repeat. Phosphothreonine is present on Thr371. Phosphoserine is present on residues Ser375, Ser424, and Ser428. The segment at 432–462 (EGVKRRVKSPGSGHVKQKAVKRPASMYSTGK) is disordered. NHL repeat units follow at residues 473–516 (IFRV…FSND), 520–563 (KSRF…FSSD), 564–605 (GKFK…FQPN), 609–652 (VTRF…FNQE), 656–699 (MLKF…FDGS), and 700–743 (GSFL…YRYL).

It belongs to the TRIM/RBCC family. In terms of assembly, forms homooligomers. Interacts with TRIM3; this interaction reduces TRIM2 activity. Interacts with myosin V; myosin V may not be a substrate for ubiquitination. Interacts with NEFL. Interacts with phosphorylated BCL2L11. Interacts with SIRPA. In terms of processing, RING-type zinc finger-dependent and UBE2D1-dependent autoubiquitination.

It is found in the cytoplasm. The enzyme catalyses S-ubiquitinyl-[E2 ubiquitin-conjugating enzyme]-L-cysteine + [acceptor protein]-L-lysine = [E2 ubiquitin-conjugating enzyme]-L-cysteine + N(6)-ubiquitinyl-[acceptor protein]-L-lysine.. It functions in the pathway protein modification; protein ubiquitination. Its function is as follows. UBE2D1-dependent E3 ubiquitin-protein ligase that mediates the ubiquitination of NEFL and of phosphorylated BCL2L11. Plays a neuroprotective function. May play a role in neuronal rapid ischemic tolerance. Plays a role in antiviral immunity and limits New World arenavirus infection independently of its ubiquitin ligase activity. The polypeptide is Tripartite motif-containing protein 2 (TRIM2) (Callithrix jacchus (White-tufted-ear marmoset)).